Reading from the N-terminus, the 100-residue chain is Urease subunit gamma (100 aa).

It belongs to the urease gamma subunit family. In terms of assembly, heterotrimer of UreA (gamma), UreB (beta) and UreC (alpha) subunits. Three heterotrimers associate to form the active enzyme.

The protein resides in the cytoplasm. The enzyme catalyses urea + 2 H2O + H(+) = hydrogencarbonate + 2 NH4(+). Its pathway is nitrogen metabolism; urea degradation; CO(2) and NH(3) from urea (urease route): step 1/1. The sequence is that of Urease subunit gamma from Leptothrix cholodnii (strain ATCC 51168 / LMG 8142 / SP-6) (Leptothrix discophora (strain SP-6)).